The chain runs to 397 residues: Acetate kinase (397 aa).

Asn-7 provides a ligand contact to Mg(2+). Lys-14 lines the ATP pocket. Arg-90 provides a ligand contact to substrate. The active-site Proton donor/acceptor is the Asp-147. ATP is bound by residues His-207–Gly-211, Asp-282–Arg-284, and Gly-330–Asn-334. Glu-383 is a Mg(2+) binding site.

Belongs to the acetokinase family. As to quaternary structure, homodimer. Mg(2+) is required as a cofactor. Mn(2+) serves as cofactor.

The protein localises to the cytoplasm. It catalyses the reaction acetate + ATP = acetyl phosphate + ADP. Its pathway is metabolic intermediate biosynthesis; acetyl-CoA biosynthesis; acetyl-CoA from acetate: step 1/2. Catalyzes the formation of acetyl phosphate from acetate and ATP. Can also catalyze the reverse reaction. This Clostridium botulinum (strain Langeland / NCTC 10281 / Type F) protein is Acetate kinase.